The chain runs to 1903 residues: Plexin-A4 (1903 aa).

The signal sequence occupies residues 1–26 (MAFHNRRWNFTFSCCVVVLLLPLVAA). Residues 27–515 (RPQQPSAATR…SESQLTRVPV (489 aa)) enclose the Sema domain. The Extracellular segment spans residues 27–1246 (RPQQPSAATR…ITSDSPLSST (1220 aa)). Intrachain disulfides connect Cys97–Cys106 and Cys132–Cys140. N-linked (GlcNAc...) asparagine glycosylation is present at Asn166. Cystine bridges form between Cys291–Cys413, Cys307–Cys364, and Cys382–Cys401. The N-linked (GlcNAc...) asparagine glycan is linked to Asn450. The PSI 1 domain occupies 517 to 567 (ACEQYSSCNECLGSGDPHCGWCVLHSMCTRKEKCERSSEPRRFASNIKQCV). 4 disulfide bridges follow: Cys518–Cys535, Cys524–Cys566, Cys527–Cys544, and Cys538–Cys550. N-linked (GlcNAc...) asparagine glycosylation is found at Asn575 and Asn600. An intrachain disulfide couples Cys601 to Cys620. Asn656, Asn663, Asn764, and Asn772 each carry an N-linked (GlcNAc...) asparagine glycan. Positions 663–710 (NCSVHKSCLSCVGSPYQCHWCKYRHTCTHDPSSCSFQEGRVKQPEECP) constitute a PSI 2 domain. One can recognise a PSI 3 domain in the interval 811–864 (KCDARRESCGLCLKADPLFGCVWCKGENRCSLKQHCSYPQSMWLEHNGINSKCT). IPT/TIG domains lie at 866–960 (PRIT…YYFV), 962–1046 (PQLL…FEYV), 1049–1148 (PTIT…FVYY), and 1151–1246 (PVFE…LSST). N-linked (GlcNAc...) asparagine glycans are attached at residues Asn981, Asn992, Asn1025, Asn1141, Asn1189, and Asn1214. The chain crosses the membrane as a helical span at residues 1247 to 1267 (AVISIAGAGGLLIFFIVIVLI). Residues 1268 to 1903 (AYKRKSRESD…QVVAFMSLES (636 aa)) are Cytoplasmic-facing.

The protein belongs to the plexin family.

It is found in the cell membrane. Functionally, involved in the development of primary sensory neurons especially in branching of the peripheral axons. Interacts with the SLIT2 signaling specifically to promote axonal branching of Rohon-Beard neurons and the trigeminal sensory ganglion neurons. This is Plexin-A4 (plxna4) from Danio rerio (Zebrafish).